Reading from the N-terminus, the 43-residue chain is Thymosin beta-12 (43 aa).

2 stretches are compositionally biased toward basic and acidic residues: residues 1-25 and 33-43; these read MSDK…ETQE and ETIEQEKQATA. The disordered stretch occupies residues 1 to 43; the sequence is MSDKPDLAEVSNFDKTKLKKTETQEKNPLPTKETIEQEKQATA. S2 is modified (N-acetylserine).

The protein belongs to the thymosin beta family.

Its subcellular location is the cytoplasm. It localises to the cytoskeleton. Plays an important role in the organization of the cytoskeleton. Binds to and sequesters actin monomers (G actin) and therefore inhibits actin polymerization. The sequence is that of Thymosin beta-12 from Oncorhynchus mykiss (Rainbow trout).